The sequence spans 162 residues: NADH-quinone oxidoreductase subunit I (162 aa).

4Fe-4S ferredoxin-type domains follow at residues 53-83 and 93-122; these read LRRY…IDSA and TRYD…ETHI. Residues Cys63, Cys66, Cys69, Cys73, Cys102, Cys105, Cys108, and Cys112 each coordinate [4Fe-4S] cluster.

This sequence belongs to the complex I 23 kDa subunit family. In terms of assembly, NDH-1 is composed of 14 different subunits. Subunits NuoA, H, J, K, L, M, N constitute the membrane sector of the complex. It depends on [4Fe-4S] cluster as a cofactor.

The protein localises to the cell inner membrane. It catalyses the reaction a quinone + NADH + 5 H(+)(in) = a quinol + NAD(+) + 4 H(+)(out). Functionally, NDH-1 shuttles electrons from NADH, via FMN and iron-sulfur (Fe-S) centers, to quinones in the respiratory chain. The immediate electron acceptor for the enzyme in this species is believed to be ubiquinone. Couples the redox reaction to proton translocation (for every two electrons transferred, four hydrogen ions are translocated across the cytoplasmic membrane), and thus conserves the redox energy in a proton gradient. The chain is NADH-quinone oxidoreductase subunit I from Xanthomonas axonopodis pv. citri (strain 306).